A 564-amino-acid polypeptide reads, in one-letter code: Hexose transporter HXT17 (564 aa).

Positions methionine 1–glutamine 12 are enriched in basic and acidic residues. A disordered region spans residues methionine 1–alanine 22. Residues methionine 1–isoleucine 52 lie on the Cytoplasmic side of the membrane. Residues glycine 53–tryptophan 73 form a helical membrane-spanning segment. The Extracellular portion of the chain corresponds to aspartate 74–glycine 109. A helical membrane pass occupies residues leucine 110 to alanine 130. Residues aspartate 131–arginine 136 are Cytoplasmic-facing. Residues leucine 137–asparagine 157 form a helical membrane-spanning segment. Topologically, residues histidine 158–lysine 167 are extracellular. Residues isoleucine 168–isoleucine 188 traverse the membrane as a helical segment. Residues alanine 189 to arginine 194 are Cytoplasmic-facing. The chain crosses the membrane as a helical span at residues glycine 195–serine 215. Topologically, residues valine 216 to arginine 229 are extracellular. Residues valine 230–proline 250 traverse the membrane as a helical segment. Residues glutamate 251–glutamate 333 are Cytoplasmic-facing. A helical membrane pass occupies residues asparagine 334 to threonine 350. Residues aspartate 351–serine 356 are Extracellular-facing. A helical membrane pass occupies residues isoleucine 357–valine 374. The Cytoplasmic portion of the chain corresponds to aspartate 375–lysine 381. The helical transmembrane segment at cysteine 382–valine 402 threads the bilayer. Over lysine 403–valine 424 the chain is Extracellular. The helical transmembrane segment at phenylalanine 425 to valine 445 threads the bilayer. Residues alanine 446–threonine 462 are Cytoplasmic-facing. Residues alanine 463–isoleucine 483 traverse the membrane as a helical segment. Histidine 484 is a topological domain (extracellular). The helical transmembrane segment at phenylalanine 485–phenylalanine 505 threads the bilayer. Residues leucine 506 to aspartate 564 are Cytoplasmic-facing.

Belongs to the major facilitator superfamily. Sugar transporter (TC 2.A.1.1) family.

The protein localises to the membrane. Probable glucose transporter. In Saccharomyces cerevisiae (strain ATCC 204508 / S288c) (Baker's yeast), this protein is Hexose transporter HXT17 (HXT17).